Consider the following 444-residue polypeptide: Probable glycine dehydrogenase (decarboxylating) subunit 1 (444 aa).

Belongs to the GcvP family. N-terminal subunit subfamily. In terms of assembly, the glycine cleavage system is composed of four proteins: P, T, L and H. In this organism, the P 'protein' is a heterodimer of two subunits.

It catalyses the reaction N(6)-[(R)-lipoyl]-L-lysyl-[glycine-cleavage complex H protein] + glycine + H(+) = N(6)-[(R)-S(8)-aminomethyldihydrolipoyl]-L-lysyl-[glycine-cleavage complex H protein] + CO2. The glycine cleavage system catalyzes the degradation of glycine. The P protein binds the alpha-amino group of glycine through its pyridoxal phosphate cofactor; CO(2) is released and the remaining methylamine moiety is then transferred to the lipoamide cofactor of the H protein. In Chlorobium luteolum (strain DSM 273 / BCRC 81028 / 2530) (Pelodictyon luteolum), this protein is Probable glycine dehydrogenase (decarboxylating) subunit 1.